Here is a 1755-residue protein sequence, read N- to C-terminus: Transposon Ty1-MR1 Gag-Pol polyprotein (1755 aa).

3 stretches are compositionally biased toward polar residues: residues 1 to 31, 46 to 60, and 137 to 168; these read MESQ…TTQD, VSTQ…TPLS, and VGTH…TNQH. Disordered stretches follow at residues 1–88, 137–174, and 350–420; these read MESQ…YPQQ, VGTH…PPPI, and QQES…IRGS. Residues 299–401 are RNA-binding; that stretch reads NNGIPINNKV…NSQSRTARAH (103 aa). The span at 363–372 shows a compositional bias: basic and acidic residues; sequence SPSDEKKDSR. A compositionally biased stretch (polar residues) spans 373–411; the sequence is TYTNTTKPKSITRNSQKPNNSQSRTARAHNVSTFNNSPG. Asp-461 functions as the For protease activity; shared with dimeric partner in the catalytic mechanism. An integrase-type zinc finger-like region spans residues 583–640; the sequence is NVHTSESTRKYPYPFIHRMLAHANAQTIRYSLKNNTITYFNESDVDWSSAIDYQCPDC. Positions 660–835 constitute an Integrase catalytic domain; that stretch reads NSYEPFQYLH…AGLDISTLLP (176 aa). Residues Asp-671 and Asp-736 each contribute to the Mg(2+) site. The segment at 958–1172 is disordered; that stretch reads AVSPTDSTPP…LGGIGDSNAY (215 aa). Positions 960–969 are enriched in low complexity; it reads SPTDSTPPST. Polar residues predominate over residues 1005-1015; sequence STPQISDIEST. The span at 1038–1053 shows a compositional bias: basic and acidic residues; the sequence is ESSHASKSKDFRHSDS. Polar residues-rich tracts occupy residues 1054–1082 and 1095–1106; these read YSDN…QTSE and SIDTSSSESNSL. The Bipartite nuclear localization signal motif lies at 1178–1212; it reads KKRSLEDNETEIKVSRDTWNTKNMRSLEPPRSKKR. Residues 1338–1476 form the Reverse transcriptase Ty1/copia-type domain; the sequence is NNYYITQLDI…DILGLEIKYQ (139 aa). Residues Asp-1346, Asp-1427, Asp-1428, Asp-1610, Glu-1652, and Asp-1685 each coordinate Mg(2+). Positions 1610-1752 constitute an RNase H Ty1/copia-type domain; sequence DASYGNQPYY…IKTFKLLTNK (143 aa).

As to quaternary structure, the capsid protein forms a homotrimer, from which the VLPs are assembled. The protease is a homodimer, whose active site consists of two apposed aspartic acid residues. Initially, virus-like particles (VLPs) are composed of the structural unprocessed proteins Gag and Gag-Pol, and also contain the host initiator methionine tRNA (tRNA(i)-Met) which serves as a primer for minus-strand DNA synthesis, and a dimer of genomic Ty RNA. Processing of the polyproteins occurs within the particle and proceeds by an ordered pathway, called maturation. First, the protease (PR) is released by autocatalytic cleavage of the Gag-Pol polyprotein yielding capsid protein p45 and a Pol-p154 precursor protein. This cleavage is a prerequisite for subsequent processing of Pol-p154 at the remaining sites to release the mature structural and catalytic proteins. Maturation takes place prior to the RT reaction and is required to produce transposition-competent VLPs.

It is found in the cytoplasm. Its subcellular location is the nucleus. The catalysed reaction is DNA(n) + a 2'-deoxyribonucleoside 5'-triphosphate = DNA(n+1) + diphosphate. It carries out the reaction Endonucleolytic cleavage to 5'-phosphomonoester.. In terms of biological role, capsid protein (CA) is the structural component of the virus-like particle (VLP), forming the shell that encapsulates the retrotransposons dimeric RNA genome. The particles are assembled from trimer-clustered units and there are holes in the capsid shells that allow for the diffusion of macromolecules. CA also has nucleocapsid-like chaperone activity, promoting primer tRNA(i)-Met annealing to the multipartite primer-binding site (PBS), dimerization of Ty1 RNA and initiation of reverse transcription. The aspartyl protease (PR) mediates the proteolytic cleavages of the Gag and Gag-Pol polyproteins after assembly of the VLP. Functionally, reverse transcriptase/ribonuclease H (RT) is a multifunctional enzyme that catalyzes the conversion of the retro-elements RNA genome into dsDNA within the VLP. The enzyme displays a DNA polymerase activity that can copy either DNA or RNA templates, and a ribonuclease H (RNase H) activity that cleaves the RNA strand of RNA-DNA heteroduplexes during plus-strand synthesis and hydrolyzes RNA primers. The conversion leads to a linear dsDNA copy of the retrotransposon that includes long terminal repeats (LTRs) at both ends. Its function is as follows. Integrase (IN) targets the VLP to the nucleus, where a subparticle preintegration complex (PIC) containing at least integrase and the newly synthesized dsDNA copy of the retrotransposon must transit the nuclear membrane. Once in the nucleus, integrase performs the integration of the dsDNA into the host genome. This chain is Transposon Ty1-MR1 Gag-Pol polyprotein (TY1B-MR1), found in Saccharomyces cerevisiae (strain ATCC 204508 / S288c) (Baker's yeast).